Consider the following 473-residue polypeptide: Chromosomal replication initiator protein DnaA (473 aa).

A domain I, interacts with DnaA modulators region spans residues 1–87; sequence MADGEESISV…LAVTTFAIVV (87 aa). The domain II stretch occupies residues 87–132; it reads VNPEIQQESLSTVGEPEPTPAPYLDVATFTVAPPAEITAPPRNGDT. The tract at residues 133–349 is domain III, AAA+ region; that stretch reads RLNSKYSFDN…GTLIRVTAFA (217 aa). Residues Gly-177, Gly-179, Lys-180, and Thr-181 each contribute to the ATP site. The tract at residues 350–473 is domain IV, binds dsDNA; it reads SLNRTPVDMP…LTSRIKQNHR (124 aa).

The protein belongs to the DnaA family. As to quaternary structure, oligomerizes as a right-handed, spiral filament on DNA at oriC.

The protein resides in the cytoplasm. Plays an essential role in the initiation and regulation of chromosomal replication. ATP-DnaA binds to the origin of replication (oriC) to initiate formation of the DNA replication initiation complex once per cell cycle. Binds the DnaA box (a 9 base pair repeat at the origin) and separates the double-stranded (ds)DNA. Forms a right-handed helical filament on oriC DNA; dsDNA binds to the exterior of the filament while single-stranded (ss)DNA is stabiized in the filament's interior. The ATP-DnaA-oriC complex binds and stabilizes one strand of the AT-rich DNA unwinding element (DUE), permitting loading of DNA polymerase. After initiation quickly degrades to an ADP-DnaA complex that is not apt for DNA replication. Binds acidic phospholipids. The sequence is that of Chromosomal replication initiator protein DnaA from Leifsonia xyli subsp. xyli (strain CTCB07).